Here is a 505-residue protein sequence, read N- to C-terminus: Aminoaldehyde dehydrogenase 2 (505 aa).

Isoleucine 31 and aspartate 99 together coordinate Na(+). NAD(+) contacts are provided by residues 159-161 (TPW) and 185-188 (KPSE). Leucine 189 provides a ligand contact to Na(+). 238–242 (GSGPT) provides a ligand contact to NAD(+). The active-site Proton acceptor is the glutamate 260. Leucine 261 contacts NAD(+). Cysteine 295 acts as the Nucleophile in catalysis. 2 residues coordinate NAD(+): glutamate 394 and tryptophan 460.

Belongs to the aldehyde dehydrogenase family. In terms of assembly, forms homodimers.

The enzyme catalyses 4-aminobutanal + NAD(+) + H2O = 4-aminobutanoate + NADH + 2 H(+). It carries out the reaction 3-aminopropanal + NAD(+) + H2O = beta-alanine + NADH + 2 H(+). It catalyses the reaction 4-(trimethylamino)butanal + NAD(+) + H2O = 4-(trimethylamino)butanoate + NADH + 2 H(+). The catalysed reaction is 4-guanidinobutanal + NAD(+) + H2O = 4-guanidinobutanoate + NADH + 2 H(+). It participates in amine and polyamine biosynthesis; betaine biosynthesis via choline pathway; betaine from betaine aldehyde: step 1/1. Its function is as follows. Dehydrogenase that catalyzes the oxidation of several aminoaldehydes. Metabolizes and detoxifies aldehyde products of polyamine degradation to non-toxic amino acids. Catalyzes the oxidation of 4-aminobutanal and 3-aminopropanal to 4-aminobutanoate and beta-alanine, respectively. Catalyzes the oxidation of 4-(trimethylamino)butanal and 4-guanidinobutanal to 4-trimethylammoniobutanoate and 4-guanidinobutanoate, respectively. This chain is Aminoaldehyde dehydrogenase 2, found in Solanum lycopersicum (Tomato).